The chain runs to 466 residues: 3-isopropylmalate dehydratase large subunit (466 aa).

Positions 347, 407, and 410 each coordinate [4Fe-4S] cluster.

Belongs to the aconitase/IPM isomerase family. LeuC type 1 subfamily. Heterodimer of LeuC and LeuD. [4Fe-4S] cluster serves as cofactor.

The catalysed reaction is (2R,3S)-3-isopropylmalate = (2S)-2-isopropylmalate. The protein operates within amino-acid biosynthesis; L-leucine biosynthesis; L-leucine from 3-methyl-2-oxobutanoate: step 2/4. Catalyzes the isomerization between 2-isopropylmalate and 3-isopropylmalate, via the formation of 2-isopropylmaleate. This is 3-isopropylmalate dehydratase large subunit from Shigella boydii serotype 4 (strain Sb227).